The chain runs to 151 residues: UPF0178 protein PST_0536 (151 aa).

The protein belongs to the UPF0178 family.

The sequence is that of UPF0178 protein PST_0536 from Stutzerimonas stutzeri (strain A1501) (Pseudomonas stutzeri).